The chain runs to 410 residues: Serine/threonine transporter SstT (410 aa).

9 consecutive transmembrane segments (helical) span residues 11–31 (VSLV…AVTV), 45–65 (FVGA…ISAI), 79–99 (ILIL…VASF), 138–158 (ALLN…GIAL), 179–199 (IVTW…FDAI), 214–234 (LAVL…LIVF), 285–305 (ISIP…ISVL), 327–347 (VLSA…LLLI), and 353–373 (LFGI…IIGV).

This sequence belongs to the dicarboxylate/amino acid:cation symporter (DAACS) (TC 2.A.23) family.

The protein localises to the cell membrane. It carries out the reaction L-serine(in) + Na(+)(in) = L-serine(out) + Na(+)(out). The catalysed reaction is L-threonine(in) + Na(+)(in) = L-threonine(out) + Na(+)(out). Functionally, involved in the import of serine and threonine into the cell, with the concomitant import of sodium (symport system). This is Serine/threonine transporter SstT from Geobacillus thermodenitrificans (strain NG80-2).